Consider the following 208-residue polypeptide: Small ribosomal subunit protein uS9c (208 aa).

The transit peptide at 1–51 (MAVSISSLTSSFASLSFTSNLTPKPQTLPMARTKPFSLSNPAVVKPLVITA) directs the protein to the chloroplast. Thr-52 carries the N-acetylthreonine modification. The interval 185-208 (DSRIVERKKPGLKKARKAPQFSKR) is disordered. Basic residues predominate over residues 194 to 208 (PGLKKARKAPQFSKR).

In terms of assembly, component of the chloroplast small ribosomal subunit (SSU). Mature 70S chloroplast ribosomes of higher plants consist of a small (30S) and a large (50S) subunit. The 30S small subunit contains 1 molecule of ribosomal RNA (16S rRNA) and 24 different proteins. The 50S large subunit contains 3 rRNA molecules (23S, 5S and 4.5S rRNA) and 33 different proteins. uS9c binds directly to 16S ribosomal RNA. uS9c interacts with translation factor pY (PSRP1).

The protein resides in the plastid. It localises to the chloroplast. Functionally, component of the chloroplast ribosome (chloro-ribosome), a dedicated translation machinery responsible for the synthesis of chloroplast genome-encoded proteins, including proteins of the transcription and translation machinery and components of the photosynthetic apparatus. The protein is Small ribosomal subunit protein uS9c (PRPS9) of Spinacia oleracea (Spinach).